Here is a 154-residue protein sequence, read N- to C-terminus: Myoglobin (154 aa).

One can recognise a Globin domain in the interval 2 to 148; that stretch reads GLSDGEWQLV…FRNDMAAKYK (147 aa). The residue at position 4 (Ser-4) is a Phosphoserine. His-65 contacts nitrite. His-65 serves as a coordination point for O2. Phosphothreonine is present on Thr-68. His-94 lines the heme b pocket.

Belongs to the globin family. Monomeric.

Its subcellular location is the cytoplasm. It is found in the sarcoplasm. The enzyme catalyses Fe(III)-heme b-[protein] + nitric oxide + H2O = Fe(II)-heme b-[protein] + nitrite + 2 H(+). It carries out the reaction H2O2 + AH2 = A + 2 H2O. Functionally, monomeric heme protein which primary function is to store oxygen and facilitate its diffusion within muscle tissues. Reversibly binds oxygen through a pentacoordinated heme iron and enables its timely and efficient release as needed during periods of heightened demand. Depending on the oxidative conditions of tissues and cells, and in addition to its ability to bind oxygen, it also has a nitrite reductase activity whereby it regulates the production of bioactive nitric oxide. Under stress conditions, like hypoxia and anoxia, it also protects cells against reactive oxygen species thanks to its pseudoperoxidase activity. The sequence is that of Myoglobin (MB) from Ochotona curzoniae (Black-lipped pika).